We begin with the raw amino-acid sequence, 140 residues long: Putative pre-16S rRNA nuclease (140 aa).

Belongs to the YqgF nuclease family.

It localises to the cytoplasm. Functionally, could be a nuclease involved in processing of the 5'-end of pre-16S rRNA. This is Putative pre-16S rRNA nuclease from Vibrio vulnificus (strain YJ016).